We begin with the raw amino-acid sequence, 245 residues long: MADKYGPIFSLQLGIHKTIVVSSWAVAKECFTTHDKVFLTRPKSLAGKHMGYDHSVFLFLAYGPYWRDTRKLLIVELLSNRRLDVLKHVRESEVNSFVREMYEQWISNGGGGSKAVVEMKERFGYLTMNVILRMVAGKRYSGTEVYSDEARRFQKALGDLLHLVVLSMVSDAVPLFGWIDALRGYTGEMKNTAKEIDHVLGRWLKEHRQKRETLSINESEHDFIHGMQSVMDGSQFTEHDTDKAI.

The protein belongs to the cytochrome P450 family. Heme serves as cofactor.

Functionally, probable heme-thiolate monooxygenase. The sequence is that of Cytochrome P450 CYP82H23 from Panax ginseng (Korean ginseng).